The primary structure comprises 212 residues: Ribosomal RNA small subunit methyltransferase G (212 aa).

S-adenosyl-L-methionine contacts are provided by residues Gly-80, Leu-85, 131–132 (AE), and Arg-146.

It belongs to the methyltransferase superfamily. RNA methyltransferase RsmG family.

It is found in the cytoplasm. It catalyses the reaction guanosine(527) in 16S rRNA + S-adenosyl-L-methionine = N(7)-methylguanosine(527) in 16S rRNA + S-adenosyl-L-homocysteine. Functionally, specifically methylates the N7 position of guanine in position 527 of 16S rRNA. The polypeptide is Ribosomal RNA small subunit methyltransferase G (Xanthomonas axonopodis pv. citri (strain 306)).